Here is a 498-residue protein sequence, read N- to C-terminus: Pentatricopeptide repeat-containing protein At2g15980 (498 aa).

PPR repeat units follow at residues 244–274 (NATTFNSMMVSFYREGETEMVERIWREMEEE), 280–314 (NVYSYNVLMEAYCARGLMSEAEKVWEEMKVRGVVY), 315–349 (DIVAYNTMIGGLCSNFEVVKAKELFRDMGLKGIEC), 350–384 (TCLTYEHLVNGYCKAGDVDSGLVVYREMKRKGFEA), 385–423 (DGLTIEALVEGLCDDRDGQRVVEAADIVKDAVREAMFYP), 424–458 (SRNCYELLVKRLCEDGKMDRALNIQAEMVGKGFKP), and 459–489 (SQETYRAFIDGYGIVGDEETSALLAIEMAES).

It belongs to the PPR family. P subfamily.

This chain is Pentatricopeptide repeat-containing protein At2g15980, found in Arabidopsis thaliana (Mouse-ear cress).